The primary structure comprises 29 residues: Potassium channel toxin alpha-KTx 8.4 (29 aa).

3 disulfides stabilise this stretch: C3-C19, C6-C24, and C10-C26.

Belongs to the short scorpion toxin superfamily. Potassium channel inhibitor family. Alpha-KTx 08 subfamily. In terms of tissue distribution, expressed by the venom gland.

The protein resides in the secreted. Its function is as follows. Inhibits voltage-gated potassium channels. The sequence is that of Potassium channel toxin alpha-KTx 8.4 from Leiurus hebraeus (Hebrew deathstalker scorpion).